The chain runs to 362 residues: Mannose-1-phosphate guanyltransferase (362 aa).

The protein belongs to the transferase hexapeptide repeat family.

It localises to the cytoplasm. The catalysed reaction is alpha-D-mannose 1-phosphate + GTP + H(+) = GDP-alpha-D-mannose + diphosphate. It functions in the pathway nucleotide-sugar biosynthesis; GDP-alpha-D-mannose biosynthesis; GDP-alpha-D-mannose from alpha-D-mannose 1-phosphate (GTP route): step 1/1. Involved in cell wall synthesis where it is required for glycosylation. Involved in cell cycle progression through cell-size checkpoint. The chain is Mannose-1-phosphate guanyltransferase (MPG1) from Debaryomyces hansenii (strain ATCC 36239 / CBS 767 / BCRC 21394 / JCM 1990 / NBRC 0083 / IGC 2968) (Yeast).